We begin with the raw amino-acid sequence, 146 residues long: MKTYAQKASEVQREWYVIDATNQTLGRLATQIATLLRGKHKPTFSPYIDGGDFVIVVNAERIRLTGRKPEQKMYYRHSNYPGGFKAVSFKQLMAKHPERVLRFAVKGMLPKTRLGRQQLTKLKIYAGPKHPHAAQQPKVYEPRPRG.

Residues 125 to 146 (YAGPKHPHAAQQPKVYEPRPRG) form a disordered region.

This sequence belongs to the universal ribosomal protein uL13 family. In terms of assembly, part of the 50S ribosomal subunit.

In terms of biological role, this protein is one of the early assembly proteins of the 50S ribosomal subunit, although it is not seen to bind rRNA by itself. It is important during the early stages of 50S assembly. This chain is Large ribosomal subunit protein uL13, found in Roseiflexus sp. (strain RS-1).